Here is a 438-residue protein sequence, read N- to C-terminus: Enolase (438 aa).

Gln-163 lines the (2R)-2-phosphoglycerate pocket. The Proton donor role is filled by Glu-205. Mg(2+) contacts are provided by Asp-243, Glu-292, and Asp-319. The (2R)-2-phosphoglycerate site is built by Lys-344, Arg-373, Ser-374, and Lys-395. Residue Lys-344 is the Proton acceptor of the active site.

This sequence belongs to the enolase family. The cofactor is Mg(2+).

Its subcellular location is the cytoplasm. It is found in the secreted. It localises to the cell surface. It carries out the reaction (2R)-2-phosphoglycerate = phosphoenolpyruvate + H2O. It participates in carbohydrate degradation; glycolysis; pyruvate from D-glyceraldehyde 3-phosphate: step 4/5. In terms of biological role, catalyzes the reversible conversion of 2-phosphoglycerate (2-PG) into phosphoenolpyruvate (PEP). It is essential for the degradation of carbohydrates via glycolysis. In Streptococcus agalactiae, this protein is Enolase.